We begin with the raw amino-acid sequence, 130 residues long: Holo-[acyl-carrier-protein] synthase (130 aa).

Residues aspartate 9 and glutamate 58 each contribute to the Mg(2+) site.

The protein belongs to the P-Pant transferase superfamily. AcpS family. Requires Mg(2+) as cofactor.

The protein resides in the cytoplasm. It catalyses the reaction apo-[ACP] + CoA = holo-[ACP] + adenosine 3',5'-bisphosphate + H(+). In terms of biological role, transfers the 4'-phosphopantetheine moiety from coenzyme A to a Ser of acyl-carrier-protein. In Mycolicibacterium paratuberculosis (strain ATCC BAA-968 / K-10) (Mycobacterium paratuberculosis), this protein is Holo-[acyl-carrier-protein] synthase.